The following is a 132-amino-acid chain: Replication enhancer protein (132 aa).

It belongs to the geminiviridae replication enhancer protein family. As to quaternary structure, homooligomer. Interacts with the replication-associated protein (REP). Interacts with host proliferating cell nuclear antigen (PCNA). Interacts with host retinoblastoma-related protein 1 (RBR1), and may thereby deregulate the host cell cycle. Oligomerization and interaction with PCNA are necessary for optimal replication enhancement.

Increases viral DNA accumulation. Enhances infectivity and symptom expression. The chain is Replication enhancer protein from Tomato mottle virus (isolate Florida) (ToMoV).